Here is a 502-residue protein sequence, read N- to C-terminus: Medium/long-chain-fatty-acid--CoA ligase FadD17 (502 aa).

The protein belongs to the ATP-dependent AMP-binding enzyme family.

The catalysed reaction is a medium-chain fatty acid + ATP + CoA = a medium-chain fatty acyl-CoA + AMP + diphosphate. It carries out the reaction a long-chain fatty acid + ATP + CoA = a long-chain fatty acyl-CoA + AMP + diphosphate. It participates in lipid metabolism; fatty acid biosynthesis. Its function is as follows. Catalyzes the activation of medium/long-chain fatty acids as acyl-coenzyme A (acyl-CoA), which are then transferred to the multifunctional polyketide synthase (PKS) type III for further chain extension. The chain is Medium/long-chain-fatty-acid--CoA ligase FadD17 (fadD17) from Mycobacterium bovis (strain ATCC BAA-935 / AF2122/97).